The primary structure comprises 184 residues: NADH-quinone oxidoreductase subunit B (184 aa).

[4Fe-4S] cluster is bound by residues Cys-63, Cys-64, Cys-128, and Cys-158.

This sequence belongs to the complex I 20 kDa subunit family. NDH-1 is composed of 14 different subunits. Subunits NuoB, C, D, E, F, and G constitute the peripheral sector of the complex. Requires [4Fe-4S] cluster as cofactor.

It localises to the cell inner membrane. It carries out the reaction a quinone + NADH + 5 H(+)(in) = a quinol + NAD(+) + 4 H(+)(out). Functionally, NDH-1 shuttles electrons from NADH, via FMN and iron-sulfur (Fe-S) centers, to quinones in the respiratory chain. The immediate electron acceptor for the enzyme in this species is believed to be ubiquinone. Couples the redox reaction to proton translocation (for every two electrons transferred, four hydrogen ions are translocated across the cytoplasmic membrane), and thus conserves the redox energy in a proton gradient. The sequence is that of NADH-quinone oxidoreductase subunit B from Xylella fastidiosa (strain M12).